Consider the following 319-residue polypeptide: Cell division protein FtsQ (319 aa).

Residues 1–53 are disordered; sequence MDSREDMVPDVLLEAPNPRRRQSADTSTERPTRPARREQGYARVTPRGERMGN. The Cytoplasmic segment spans residues 1 to 70; the sequence is MDSREDMVPD…PDFFAWFDPR (70 aa). Residues 27 to 52 are compositionally biased toward basic and acidic residues; it reads STERPTRPARREQGYARVTPRGERMG. A helical membrane pass occupies residues 71–87; sequence WLWVPLMVCLAVGGYWA. The Periplasmic portion of the chain corresponds to 88 to 319; sequence YEPLEKLLER…NATRNAPTHP (232 aa). Residues 97-166 enclose the POTRA domain; it reads RPFKSVVVEG…DTLVVKIAEQ (70 aa).

The protein belongs to the FtsQ/DivIB family. FtsQ subfamily. As to quaternary structure, part of a complex composed of FtsB, FtsL and FtsQ.

Its subcellular location is the cell inner membrane. In terms of biological role, essential cell division protein. May link together the upstream cell division proteins, which are predominantly cytoplasmic, with the downstream cell division proteins, which are predominantly periplasmic. May control correct divisome assembly. In Cellvibrio japonicus (strain Ueda107) (Pseudomonas fluorescens subsp. cellulosa), this protein is Cell division protein FtsQ.